Consider the following 337-residue polypeptide: MASRAGSARRAPENEATIQYVQCDGLAVMKIVKHCHEESCSNMEVAQGALLGLVVENRLEITNCFPFPKHDDTMDEEEYQLDMMRRLRRVNVDHFHVGWYQSADVGNFLSLSLLESQYHYQTSIEESVVVIYDTKKSARGFLTLKAYRLTPQAIAMYKEGDYTPEALRNLKIGYENLFIEVPIVIRNSPLTNIMISELTEMIPEEEGSKFLDLGTASVLEGQLRSLMERVDELNQEAIKFNRYQQLVVRQQQDKHRWMVKRAQENAARAAKDETPLPEEDVNKLFKPHPVPPRLNPMIVAGQIDTYSQHISQFCSQSLAKLYLTQALQNAKEAKQNN.

Positions 21–153 (VQCDGLAVMK…LKAYRLTPQA (133 aa)) constitute an MPN domain.

It belongs to the eIF-3 subunit H family. As to quaternary structure, component of the eukaryotic translation initiation factor 3 (eIF-3) complex.

The protein resides in the cytoplasm. In terms of biological role, component of the eukaryotic translation initiation factor 3 (eIF-3) complex, which is involved in protein synthesis of a specialized repertoire of mRNAs and, together with other initiation factors, stimulates binding of mRNA and methionyl-tRNAi to the 40S ribosome. The eIF-3 complex specifically targets and initiates translation of a subset of mRNAs involved in cell proliferation. The chain is Eukaryotic translation initiation factor 3 subunit H from Bombyx mori (Silk moth).